Consider the following 148-residue polypeptide: Large ribosomal subunit protein bL9 (148 aa).

This sequence belongs to the bacterial ribosomal protein bL9 family.

Binds to the 23S rRNA. The sequence is that of Large ribosomal subunit protein bL9 from Listeria innocua serovar 6a (strain ATCC BAA-680 / CLIP 11262).